The chain runs to 107 residues: Small ribosomal subunit protein uS10 (107 aa).

It belongs to the universal ribosomal protein uS10 family. As to quaternary structure, part of the 30S ribosomal subunit.

Functionally, involved in the binding of tRNA to the ribosomes. In Deinococcus deserti (strain DSM 17065 / CIP 109153 / LMG 22923 / VCD115), this protein is Small ribosomal subunit protein uS10.